We begin with the raw amino-acid sequence, 311 residues long: Cyclin-dependent kinase B1-2 (311 aa).

Residues 4 to 303 form the Protein kinase domain; sequence YEKLEKVGEG…AKAALDHPYF (300 aa). ATP is bound by residues 10 to 18 and Lys33; that span reads VGEGTYGKV. Tyr15 bears the Phosphotyrosine mark. The Proton acceptor role is filled by Asp144. A Phosphothreonine modification is found at Thr178.

It belongs to the protein kinase superfamily. CMGC Ser/Thr protein kinase family. CDC2/CDKX subfamily. Interacts with CKS1. Expressed in flowers.

The catalysed reaction is L-seryl-[protein] + ATP = O-phospho-L-seryl-[protein] + ADP + H(+). It carries out the reaction L-threonyl-[protein] + ATP = O-phospho-L-threonyl-[protein] + ADP + H(+). The enzyme catalyses [DNA-directed RNA polymerase] + ATP = phospho-[DNA-directed RNA polymerase] + ADP + H(+). Its function is as follows. Together with CDKB1-1, promotes both the last division in the stomatal cell lineage as well as the number of stomata. In collaboration with MYB124 and MYB88, restrict the G1/S transition and chloroplast and nuclear number during stomatal formation, and normally maintain fate and developmental progression throughout the stomatal cell lineage. The polypeptide is Cyclin-dependent kinase B1-2 (CDKB1-2) (Arabidopsis thaliana (Mouse-ear cress)).